The following is a 390-amino-acid chain: Isotocin receptor (390 aa).

Residues 1–48 (MEEMFKEQDFWSFNESSRNSTVGNETFGGNQTVNPLKRNEEVAKVEVT) are Extracellular-facing. N-linked (GlcNAc...) asparagine glycans are attached at residues Asn-14, Asn-19, Asn-24, and Asn-30. Residues 49 to 69 (VLALVLFLALAGNLCVLIAIY) traverse the membrane as a helical segment. Topologically, residues 70-86 (TAKHTQSRMYYLMKHLS) are cytoplasmic. Residues 87–107 (IADLVVAVFQVLPQLIWDITF) traverse the membrane as a helical segment. The Extracellular segment spans residues 108–124 (RFYGPDFLCRLVKYLQT). A disulfide bridge links Cys-116 with Cys-191. A helical transmembrane segment spans residues 125-145 (VGMFASTYMLVLMSIDRCIAI). Residues 146–160 (CQPLRSLHKRKDRCY) lie on the Cytoplasmic side of the membrane. Residues 161–181 (VIVSWALSLVFSVPQVYIFSL) traverse the membrane as a helical segment. At 182 to 206 (REIGNGVYDCWGDFVQPWGAKAYIT) the chain is on the extracellular side. Residues 207-227 (WISLTIYIIPVAILGGCYGLI) traverse the membrane as a helical segment. Topologically, residues 228–276 (SFKIWQNFKRKTKKDQCITLTTAASKANALARVSSVKLVSKAKITTVKM) are cytoplasmic. A helical transmembrane segment spans residues 277–297 (TFVIVLAYIVCWTPFFFVQMW). The Extracellular portion of the chain corresponds to 298 to 311 (SAWDPEAPREAMPF). A helical transmembrane segment spans residues 312-332 (IISMLLASLNSCCNPWIYMFF). The Cytoplasmic segment spans residues 333-390 (AGHLFHDLKQSLLCCSTLYLKSSQCRCDQEHDSRKSNCSTYVIKSTSSQRSITQSSIT).

The protein belongs to the G-protein coupled receptor 1 family. Vasopressin/oxytocin receptor subfamily. In terms of tissue distribution, expressed in brain, intestine, bladder, skeletal muscle, lateral line, gills and kidney.

The protein resides in the cell membrane. Functionally, binds to isotocin. Can also be activated by vasotocin, mesotocin, oxytocin and Arg-vasopressin, although these have lower potencies than isotocin. Produces an induction of membrane chloride currents indicating that it is coupled to the inositol phosphate/calcium pathway. This is Isotocin receptor from Catostomus commersonii (White sucker).